The sequence spans 330 residues: Aspartate--ammonia ligase (330 aa).

This sequence belongs to the class-II aminoacyl-tRNA synthetase family. AsnA subfamily.

The protein resides in the cytoplasm. It catalyses the reaction L-aspartate + NH4(+) + ATP = L-asparagine + AMP + diphosphate + H(+). Its pathway is amino-acid biosynthesis; L-asparagine biosynthesis; L-asparagine from L-aspartate (ammonia route): step 1/1. The protein is Aspartate--ammonia ligase of Streptococcus pyogenes serotype M6 (strain ATCC BAA-946 / MGAS10394).